We begin with the raw amino-acid sequence, 323 residues long: MIRSVVRGVGSALPKRLLSNREMETLVDTSDDWIVQRTGIKQRYIAGEGETTASLGAEAALKALEAAGLAPADIDMIICATSTPDNTFPSAAVNIQNRLGMTHGFAFDVQAVCTGFVYAMTTADAYIRGGLAKRVLVIGAETFSRILDWQDRTTCVLFGDGAGALVLEAVEGQGTIADRGVLTAHLRSDGSHKDKLYVDGGPSTTGTVGHLRMEGREVFKHAVGMIADVIEQSFAASGLTAEDVDWLVPHQANRRIIDGAAKKLDIPLEKVVITVDQHGNTSAASIPLAISVAVADGRIKQGDLVLLEAMGGGFTWGALLLRW.

Residues Cys-113 and His-250 contribute to the active site. The segment at 251-255 (QANRR) is ACP-binding. Asn-280 is a catalytic residue.

Belongs to the thiolase-like superfamily. FabH family. Homodimer.

Its subcellular location is the cytoplasm. It carries out the reaction malonyl-[ACP] + acetyl-CoA + H(+) = 3-oxobutanoyl-[ACP] + CO2 + CoA. It participates in lipid metabolism; fatty acid biosynthesis. Catalyzes the condensation reaction of fatty acid synthesis by the addition to an acyl acceptor of two carbons from malonyl-ACP. Catalyzes the first condensation reaction which initiates fatty acid synthesis and may therefore play a role in governing the total rate of fatty acid production. Possesses both acetoacetyl-ACP synthase and acetyl transacylase activities. Its substrate specificity determines the biosynthesis of branched-chain and/or straight-chain of fatty acids. The sequence is that of Beta-ketoacyl-[acyl-carrier-protein] synthase III from Allorhizobium ampelinum (strain ATCC BAA-846 / DSM 112012 / S4) (Agrobacterium vitis (strain S4)).